Here is a 325-residue protein sequence, read N- to C-terminus: Heat-inducible transcription repressor HrcA (325 aa).

This sequence belongs to the HrcA family.

Negative regulator of class I heat shock genes (grpE-dnaK-dnaJ and groELS operons). Prevents heat-shock induction of these operons. This Staphylococcus haemolyticus (strain JCSC1435) protein is Heat-inducible transcription repressor HrcA.